A 120-amino-acid polypeptide reads, in one-letter code: Large ribosomal subunit protein uL18 (120 aa).

It belongs to the universal ribosomal protein uL18 family. As to quaternary structure, part of the 50S ribosomal subunit; part of the 5S rRNA/L5/L18/L25 subcomplex. Contacts the 5S and 23S rRNAs.

Its function is as follows. This is one of the proteins that bind and probably mediate the attachment of the 5S RNA into the large ribosomal subunit, where it forms part of the central protuberance. The protein is Large ribosomal subunit protein uL18 of Bacillus cereus (strain G9842).